A 122-amino-acid chain; its full sequence is Prefoldin subunit 1 (122 aa).

Ala2 is modified (N-acetylalanine).

It belongs to the prefoldin subunit beta family. In terms of assembly, heterohexamer of two PFD-alpha type and four PFD-beta type subunits.

Functionally, binds specifically to cytosolic chaperonin (c-CPN) and transfers target proteins to it. Binds to nascent polypeptide chain and promotes folding in an environment in which there are many competing pathways for nonnative proteins. The sequence is that of Prefoldin subunit 1 (PFDN1) from Homo sapiens (Human).